The chain runs to 4158 residues: Dynein axonemal heavy chain 6 (4158 aa).

Residues 1–1433 (MTFRATDSEF…VARMALSQYT (1433 aa)) form a stem region. 192-199 (IIRENEHL) serves as a coordination point for ATP. The stretch at 805-859 (CVHLGSDLEELNNEVNEVKLQAQDPQILDISADQDKIRLILNNLQSVLADLQKRA) forms a coiled coil. AAA regions lie at residues 1434–1655 (YGYE…VLVM), 1715–1948 (STIV…KKCS), 2058–2306 (KYNR…CVQG), and 2408–2659 (DYNL…LRRR). ATP-binding positions include 1472–1479 (GPAGTGKT), 1753–1760 (GPTGGGKT), 2096–2103 (GITGVGKS), and 2447–2454 (GVGGTGKQ). The segment at 2676 to 2961 (SMLSEKRKQI…KTMALTKARL (286 aa)) is stalk. The stretch at 2901 to 2996 (KRQKLRAAQA…EEISNITGNV (96 aa)) forms a coiled coil. AAA stretches follow at residues 3042–3272 (LGDP…AIKT) and 3509–3730 (LTDF…NLKL).

The protein belongs to the dynein heavy chain family. In terms of assembly, the dynein complex consists of at least two heavy chains and a number of intermediate and light chains. In terms of tissue distribution, expressed in several tissues, including brain, pituitary, testis and trachea, with highest levels in testis.

Its subcellular location is the cytoplasm. The protein resides in the cytoskeleton. The protein localises to the cilium axoneme. Its function is as follows. Force generating protein of respiratory cilia. Produces force towards the minus ends of microtubules. Dynein has ATPase activity; the force-producing power stroke is thought to occur on release of ADP. This chain is Dynein axonemal heavy chain 6, found in Homo sapiens (Human).